The primary structure comprises 1034 residues: Putative beta-glucuronidase (1034 aa).

Glu432 (proton donor) is an active-site residue. The CBM6 domain occupies 909–1034; that stretch reads VDISAEEGVL…GPFIDELFID (126 aa).

The protein belongs to the glycosyl hydrolase 2 family.

It localises to the cytoplasm. It catalyses the reaction a beta-D-glucuronoside + H2O = D-glucuronate + an alcohol. Its function is as follows. Glycoside hydrolase that may be involved in ulvan degradation. Ulvan is the main polysaccharide component of the Ulvales (green seaweed) cell wall. It is composed of disaccharide building blocks comprising 3-sulfated rhamnose (Rha3S) linked to D-glucuronic acid (GlcA), L-iduronic acid (IduA), or D-xylose (Xyl). This is Putative beta-glucuronidase from Formosa agariphila (strain DSM 15362 / KCTC 12365 / LMG 23005 / KMM 3901 / M-2Alg 35-1).